The chain runs to 506 residues: FAD-linked oxidoreductase aurO (506 aa).

Positions 92–260 constitute an FAD-binding PCMH-type domain; sequence ITAQPLAICR…AETDVRVYPM (169 aa).

Belongs to the oxygen-dependent FAD-linked oxidoreductase family. As to quaternary structure, might be part of an extracellular enzyme complex composed of GIP1, aurF, aurO and aurS. It depends on FAD as a cofactor.

The protein localises to the secreted. It localises to the extracellular space. Its pathway is pigment biosynthesis. Functionally, FAD-linked oxidoreductase; part of the gene cluster that mediates the biosynthesis of aurofusarin, a red mycelium pigment which is acting as a mycotoxin. The first step is performed by the polyketide synthase which condenses one acetyl-CoA and 6 malonyl-CoA units to form the first intermediate, the cyclic heptaketide and yellow pigment YWA1. The C2 hydroxyl group in the pyrone ring of YWA1 is probably formed during ring closure by an aldol-type cyclization reaction. The dehydratase aurZ then acts as the first tailoring enzyme in the aurofusarin biosynthetic pathway by converting YWA1 to nor-rubrofusarin. Nor-rubrofusarin is then methylated to rubrofusarin by the O-methyltransferase aurJ. Rubrofusarin is then transported across the plasma membrane by the rubrofusarin-specific pump aurT for further enzymatic processing by the extracellular complex composed of GIP1, aurF, aurO and aurS to yield aurofusarin. This Gibberella zeae (strain ATCC MYA-4620 / CBS 123657 / FGSC 9075 / NRRL 31084 / PH-1) (Wheat head blight fungus) protein is FAD-linked oxidoreductase aurO.